We begin with the raw amino-acid sequence, 277 residues long: Basic leucine zipper transcriptional factor ATF-like 2 (277 aa).

Disordered stretches follow at residues 15–50, 126–146, and 191–256; these read LGES…HQQH, FQTP…CSHE, and SFSK…QKSS. The region spanning 18–81 is the bZIP domain; sequence SQKQLKKKQK…AGWGRTLHLH (64 aa). The tract at residues 20–42 is basic motif; sequence KQLKKKQKNRVAAQRSRQKHTSK. The span at 41 to 50 shows a compositional bias: basic and acidic residues; it reads SKADALHQQH. Residues 46–67 are leucine-zipper; that stretch reads LHQQHESLEKQNHALRKEIQAL. Composition is skewed to polar residues over residues 213–227 and 247–256; these read RQEQ…SSDS and GSSTHWQKSS.

The protein belongs to the bZIP family. In terms of assembly, heterodimer; heterodimerizes with JUN family proteins.

Its subcellular location is the nucleus. Its function is as follows. AP-1 family transcription factor that controls the differentiation of lineage-specific cells in the immune system. Selectively suppresses CCN1 transcription and hence blocks the downstream cell proliferation signals produced by CCN1 and inhibits CCN1-induced anchorage-independent growth and invasion in several cancer types. Possibly acts by interfering with AP-1 binding to CCN1 promoter. Following infection, participates in the differentiation of CD8(+) thymic conventional dendritic cells in the immune system. Acts via the formation of a heterodimer with JUN family proteins that recognizes and binds DNA sequence 5'-TGA[CG]TCA-3' and regulates expression of target genes. This Mus musculus (Mouse) protein is Basic leucine zipper transcriptional factor ATF-like 2 (Batf2).